A 252-amino-acid chain; its full sequence is 5-oxoprolinase subunit A (252 aa).

It belongs to the LamB/PxpA family. In terms of assembly, forms a complex composed of PxpA, PxpB and PxpC.

The enzyme catalyses 5-oxo-L-proline + ATP + 2 H2O = L-glutamate + ADP + phosphate + H(+). Functionally, catalyzes the cleavage of 5-oxoproline to form L-glutamate coupled to the hydrolysis of ATP to ADP and inorganic phosphate. This is 5-oxoprolinase subunit A from Photorhabdus laumondii subsp. laumondii (strain DSM 15139 / CIP 105565 / TT01) (Photorhabdus luminescens subsp. laumondii).